The following is a 398-amino-acid chain: Thyrotropin-releasing hormone receptor (398 aa).

Residues 1–28 (MENETGSELNQTQLQPRAVVALEYQVVT) lie on the Extracellular side of the membrane. Residues Asn-3 and Asn-10 are each glycosylated (N-linked (GlcNAc...) asparagine). The helical transmembrane segment at 29-51 (ILLVLIICGLGIVGNIMVVLVVM) threads the bilayer. The Cytoplasmic portion of the chain corresponds to 52–61 (RTKHMRTPTN). The helical transmembrane segment at 62 to 83 (CYLVSLAVADLMVLVAAGLPNI) threads the bilayer. At 84–99 (TDSIYGSWVYGYVGCL) the chain is on the extracellular side. A disulfide bond links Cys-98 and Cys-179. Residues 100 to 121 (CITYLQYLGINASSCSITAFTI) traverse the membrane as a helical segment. The Cytoplasmic segment spans residues 122–144 (ERYIAICHPIKAQFLCTFSRAKK). A helical transmembrane segment spans residues 145–168 (IIIFVWAFTSIYCMLWFFLLDLNI). Topologically, residues 169–193 (STYKDAIVVSCGYKISRNYYSPIYL) are extracellular. Residues 194-215 (MDFGVFYVVPMILATVLYGFIA) traverse the membrane as a helical segment. The Cytoplasmic segment spans residues 216–266 (RILFLNPIPSDPKENSNMWKNDSTHQNKNLNSKTSNRYFNSTVSSRKQVTK). Residues 267–288 (MLAVVVILFALLWMPYRTLVVV) traverse the membrane as a helical segment. The Extracellular segment spans residues 289 to 296 (NSFLSSPF). Residues 297–319 (QENWFLLFCRICIYLNSAINPVI) traverse the membrane as a helical segment. Residues 320-398 (YNLMSQKFRA…LASEITFNQS (79 aa)) lie on the Cytoplasmic side of the membrane.

Belongs to the G-protein coupled receptor 1 family.

It localises to the cell membrane. In terms of biological role, receptor for thyrotropin-releasing hormone (TRH). Upon ligand binding, this G-protein-coupled receptor triggers activation of the phosphatidylinositol (IP3)-calcium-protein kinase C (PKC) pathway. This is Thyrotropin-releasing hormone receptor (TRHR) from Bos taurus (Bovine).